A 606-amino-acid polypeptide reads, in one-letter code: Phosphoenolpyruvate carboxykinase [GTP] (606 aa).

Substrate contacts are provided by residues Arg79 and 218 to 220; that span reads YGG. Mn(2+) is bound by residues Lys227 and His247. Residue Ser269 coordinates substrate. Residue 270–275 participates in GTP binding; the sequence is ACGKTN. Residue Cys271 is part of the active site. A Mn(2+)-binding site is contributed by Asp294. Residue 384-386 participates in substrate binding; the sequence is NSR. GTP-binding positions include Arg386, Arg417, and 512–515; that span reads FGEN.

This sequence belongs to the phosphoenolpyruvate carboxykinase [GTP] family. As to quaternary structure, monomer. It depends on Mn(2+) as a cofactor.

The protein localises to the cytoplasm. The catalysed reaction is oxaloacetate + GTP = phosphoenolpyruvate + GDP + CO2. It participates in carbohydrate biosynthesis; gluconeogenesis. Catalyzes the conversion of oxaloacetate (OAA) to phosphoenolpyruvate (PEP), the rate-limiting step in the metabolic pathway that produces glucose from lactate and other precursors derived from the citric acid cycle. This chain is Phosphoenolpyruvate carboxykinase [GTP], found in Corynebacterium jeikeium (strain K411).